We begin with the raw amino-acid sequence, 466 residues long: Cytochrome P450 85A1 (466 aa).

Residues 1 to 21 form a helical membrane-spanning segment; the sequence is MVLAVLIGVLVGIVLVSSLLL. Cys416 is a heme binding site.

Belongs to the cytochrome P450 family. Heme serves as cofactor.

It is found in the membrane. The catalysed reaction is 6-deoxoteasterone + reduced [NADPH--hemoprotein reductase] + O2 = 6alpha-hydroxyteasterone + oxidized [NADPH--hemoprotein reductase] + H2O + H(+). It catalyses the reaction 6alpha-hydroxytyphasterol + reduced [NADPH--hemoprotein reductase] + O2 = teasterone + oxidized [NADPH--hemoprotein reductase] + 2 H2O + H(+). It carries out the reaction 3-dehydro-6-deoxoteasterone + reduced [NADPH--hemoprotein reductase] + O2 = 3-dehydro-6alpha-hydroxyteasterone + oxidized [NADPH--hemoprotein reductase] + H2O + H(+). The enzyme catalyses 3-dehydro-6alpha-hydroxyteasterone + reduced [NADPH--hemoprotein reductase] + O2 = 3-dehydroteasterone + oxidized [NADPH--hemoprotein reductase] + 2 H2O + H(+). The catalysed reaction is 6-deoxotyphasterol + reduced [NADPH--hemoprotein reductase] + O2 = 6alpha-hydroxytyphasterol + oxidized [NADPH--hemoprotein reductase] + H2O + H(+). It catalyses the reaction 6alpha-hydroxytyphasterol + reduced [NADPH--hemoprotein reductase] + O2 = typhasterol + oxidized [NADPH--hemoprotein reductase] + 2 H2O + H(+). It carries out the reaction 6-deoxocastasterone + reduced [NADPH--hemoprotein reductase] + O2 = 6alpha-hydroxycastasterone + oxidized [NADPH--hemoprotein reductase] + H2O + H(+). The enzyme catalyses 6alpha-hydroxycastasterone + reduced [NADPH--hemoprotein reductase] + O2 = castasterone + oxidized [NADPH--hemoprotein reductase] + 2 H2O + H(+). The catalysed reaction is 3-dehydro-6-deoxoteasterone + 2 reduced [NADPH--hemoprotein reductase] + 2 O2 = 3-dehydroteasterone + 2 oxidized [NADPH--hemoprotein reductase] + 3 H2O + 2 H(+). It catalyses the reaction 6-deoxocastasterone + 2 reduced [NADPH--hemoprotein reductase] + 2 O2 = castasterone + 2 oxidized [NADPH--hemoprotein reductase] + 3 H2O + 2 H(+). It carries out the reaction 6-deoxoteasterone + 2 reduced [NADPH--hemoprotein reductase] + 2 O2 = teasterone + 2 oxidized [NADPH--hemoprotein reductase] + 3 H2O + 2 H(+). The enzyme catalyses 6-deoxotyphasterol + 2 reduced [NADPH--hemoprotein reductase] + 2 O2 = typhasterol + 2 oxidized [NADPH--hemoprotein reductase] + 3 H2O + 2 H(+). The protein operates within plant hormone biosynthesis; brassinosteroid biosynthesis. Functionally, involved in reduction steps of the biosynthesis of plant campesterol-derivative steroids, ending to castasterone (CS) but missing brassinolide (BL). Catalyzes the C6-oxidation step in brassinosteroids biosynthesis; the conversion of 6-deoxoteasterone (6-deoxoTE) to teasterone (TE), 3-dehydro-6-deoxoteasterone (6-deoxo3DT, 6-deoxo-3-DHT) to 3-dehydroteasterone (3DT, 3-DHT), 6-deoxotyphasterol (6-deoxoTY) to typhasterol (TY) and of 6-deoxocastasterone (6-deoxoCS) to castasterone (CS). The chain is Cytochrome P450 85A1 from Brachypodium distachyon (Purple false brome).